A 412-amino-acid chain; its full sequence is Transcription factor NIGT1 (412 aa).

Disordered regions lie at residues 54 to 241 (MDAA…RCWA), 286 to 310 (KYRL…PAPP), and 358 to 412 (AMLP…TTSA). A compositionally biased stretch (basic and acidic residues) spans 90–112 (ESTHADAAKSGKKEEAETSERHS). The span at 183 to 193 (ASSTTAAASST) shows a compositional bias: low complexity. Over residues 198–228 (SGDKPTDDDTEKHMETDKDNDKDAKDKDKEG) the composition is skewed to basic and acidic residues. An HTH myb-type domain is found at 232-292 (PHRKPRRCWA…HLQKYRLHTR (61 aa)). Positions 263-288 (PKQIRELMKVDGLTNDEVKSHLQKYR) form a DNA-binding region, H-T-H motif. A compositionally biased stretch (basic and acidic residues) spans 383–392 (SGSEGRRSGD). Low complexity predominate over residues 395–412 (DGSSSSPAVSSSSQTTSA).

It is found in the nucleus. In terms of biological role, transcriptional repressor that may play a role in response to nitrogen. May be involved in a time-dependent signaling for transcriptional regulation of nitrate-responsive genes. Binds specifically to the DNA sequence motif 5'-GAATC-3' or 5'-GAATATTC-3'. Represses the activity of its own promoter trough binding to these motifs. This chain is Transcription factor NIGT1, found in Oryza sativa subsp. japonica (Rice).